A 237-amino-acid polypeptide reads, in one-letter code: ATP synthase subunit a (237 aa).

5 helical membrane-spanning segments follow: residues 17–37 (LSDM…AVAA), 75–95 (FLTL…LGLP), 112–132 (DATV…YYGV), 179–201 (ILLG…GAAI), and 214–234 (GTIQ…HKVS).

The protein belongs to the ATPase A chain family. As to quaternary structure, F-type ATPases have 2 components, CF(1) - the catalytic core - and CF(0) - the membrane proton channel. CF(1) has five subunits: alpha(3), beta(3), gamma(1), delta(1), epsilon(1). CF(0) has three main subunits: a(1), b(2) and c(9-12). The alpha and beta chains form an alternating ring which encloses part of the gamma chain. CF(1) is attached to CF(0) by a central stalk formed by the gamma and epsilon chains, while a peripheral stalk is formed by the delta and b chains.

The protein resides in the cell membrane. In terms of biological role, key component of the proton channel; it plays a direct role in the translocation of protons across the membrane. This is ATP synthase subunit a from Geobacillus kaustophilus (strain HTA426).